We begin with the raw amino-acid sequence, 757 residues long: Double zinc ribbon and ankyrin repeat-containing protein 1 (757 aa).

2 consecutive DZANK-type zinc fingers follow at residues 230–290 (CAHC…VVCE) and 359–407 (CSRC…GSCG). 2 ANK repeats span residues 631 to 662 (ENRLLLEEVGSTGKGRLSVLEQLLDEGADPNC) and 666 to 695 (QGRPAVIVAVVNKHFEAIPVLAQRGADIDQ).

As to quaternary structure, interacts with NINL. Associates with DYNC1H1 and multiple dynein intermediate and light chains as well as actin-binding proteins. Expressed in retina.

It is found in the cell projection. It localises to the cilium. Its function is as follows. Involved in vesicle transport in photoreceptor cells. The chain is Double zinc ribbon and ankyrin repeat-containing protein 1 from Rattus norvegicus (Rat).